The sequence spans 446 residues: Eukaryotic translation initiation factor 2 subunit gamma (446 aa).

The tr-type G domain maps to Q21–V227. The tract at residues G30–S37 is G1. Residue A33–T38 participates in GTP binding. Residues N58–K62 are G2. The tract at residues D114 to G117 is G3. GTP is bound by residues N170–D173 and S205–Q207. The interval N170 to D173 is G4. The segment at S205–Q207 is G5. Positions A436–V446 are interacts with cdc123.

Belongs to the TRAFAC class translation factor GTPase superfamily. Classic translation factor GTPase family. EIF2G subfamily. As to quaternary structure, eukaryotic translation initiation factor 2 eIF2 is a heterotrimeric complex composed of an alpha, a beta and a gamma subunit. The factors eIF-1, eIF-2, eIF-3, TIF5/eIF-5 and methionyl-tRNAi form a multifactor complex (MFC) that may bind to the 40S ribosome. Interacts with cdc123; the interaction is direct.

Its subcellular location is the cytoplasm. It localises to the cytosol. The enzyme catalyses GTP + H2O = GDP + phosphate + H(+). Functionally, as a subunit of eukaryotic initiation factor 2 eIF2, involved in the early steps of protein synthesis. In the presence of GTP, eIF-2 forms a ternary complex with initiator tRNA Met-tRNAi and then recruits the 40S ribosomal complex and initiation factors eIF-1, eIF-1A and eIF-3 to form the 43S pre-initiation complex (43S PIC), a step that determines the rate of protein translation. The 43S PIC binds to mRNA and scans downstream to the initiation codon, where it forms a 48S initiation complex by codon-anticodon base pairing. This leads to the displacement of eIF-1 to allow GTPase-activating protein (GAP) eIF-5-mediated hydrolysis of eIF2-bound GTP. Hydrolysis of GTP and release of Pi, which makes GTP hydrolysis irreversible, causes the release of the eIF-2-GDP binary complex from the 40S subunit, an event that is essential for the subsequent joining of the 60S ribosomal subunit to form an elongation-competent 80S ribosome. In order for eIF-2 to recycle and catalyze another round of initiation, the GDP bound to eIF-2 must be exchanged with GTP by way of a reaction catalyzed by GDP-GTP exchange factor (GEF) eIF-2B. This Schizosaccharomyces pombe (strain 972 / ATCC 24843) (Fission yeast) protein is Eukaryotic translation initiation factor 2 subunit gamma (tif213).